A 276-amino-acid polypeptide reads, in one-letter code: B3 domain-containing protein REM22 (276 aa).

Residues 11-115 constitute a DNA-binding region (TF-B3); the sequence is SETMSIQDTV…VFHFCVYEYG (105 aa). The disordered stretch occupies residues 141–164; sequence GNEESTKGLEESPRRGGTSRRRAK. The span at 144–154 shows a compositional bias: basic and acidic residues; that stretch reads ESTKGLEESPR.

It is found in the nucleus. The protein is B3 domain-containing protein REM22 (REM22) of Arabidopsis thaliana (Mouse-ear cress).